We begin with the raw amino-acid sequence, 286 residues long: Meteorin-like protein (286 aa).

Residues 1–21 (MLSPFLAYLLSVVLLCRIARS) form the signal peptide. Intrachain disulfides connect cysteine 28-cysteine 51, cysteine 84-cysteine 120, cysteine 165-cysteine 235, cysteine 168-cysteine 259, and cysteine 178-cysteine 281.

It belongs to the meteorin family.

It localises to the secreted. Hormone induced following exercise or cold exposure that promotes energy expenditure. Induced either in the skeletal muscle after exercise or in adipose tissue following cold exposure and is present in the circulation. Able to stimulate energy expenditure associated with the browning of the white fat depots and improves glucose tolerance. The sequence is that of Meteorin-like protein (metrnl) from Danio rerio (Zebrafish).